A 210-amino-acid chain; its full sequence is Na(+)-translocating NADH-quinone reductase subunit D (210 aa).

Helical transmembrane passes span 42–62, 72–92, 103–123, 131–151, and 178–198; these read FVMT…ISLI, IIAQ…VLKA, VFVG…AYAM, FLDG…VATV, and NGLL…IWGV.

It belongs to the NqrDE/RnfAE family. Composed of six subunits; NqrA, NqrB, NqrC, NqrD, NqrE and NqrF.

The protein resides in the cell inner membrane. It catalyses the reaction a ubiquinone + n Na(+)(in) + NADH + H(+) = a ubiquinol + n Na(+)(out) + NAD(+). In terms of biological role, NQR complex catalyzes the reduction of ubiquinone-1 to ubiquinol by two successive reactions, coupled with the transport of Na(+) ions from the cytoplasm to the periplasm. NqrA to NqrE are probably involved in the second step, the conversion of ubisemiquinone to ubiquinol. The polypeptide is Na(+)-translocating NADH-quinone reductase subunit D (Aeromonas salmonicida (strain A449)).